A 380-amino-acid polypeptide reads, in one-letter code: Erythronate-4-phosphate dehydrogenase (380 aa).

Residues serine 45 and threonine 66 each coordinate substrate. Residues glutamine 126–valine 127, aspartate 146, threonine 174, alanine 205–arginine 207, and aspartate 231 each bind NAD(+). Residue arginine 207 is part of the active site. Residue glutamate 236 is part of the active site. Catalysis depends on histidine 253, which acts as the Proton donor. Glycine 256 serves as a coordination point for NAD(+). Tyrosine 257 provides a ligand contact to substrate.

This sequence belongs to the D-isomer specific 2-hydroxyacid dehydrogenase family. PdxB subfamily. As to quaternary structure, homodimer.

The protein localises to the cytoplasm. The enzyme catalyses 4-phospho-D-erythronate + NAD(+) = (R)-3-hydroxy-2-oxo-4-phosphooxybutanoate + NADH + H(+). It functions in the pathway cofactor biosynthesis; pyridoxine 5'-phosphate biosynthesis; pyridoxine 5'-phosphate from D-erythrose 4-phosphate: step 2/5. In terms of biological role, catalyzes the oxidation of erythronate-4-phosphate to 3-hydroxy-2-oxo-4-phosphonooxybutanoate. The chain is Erythronate-4-phosphate dehydrogenase from Pseudomonas syringae pv. syringae (strain B728a).